Here is a 156-residue protein sequence, read N- to C-terminus: Small ribosomal subunit protein uS7 (156 aa).

Belongs to the universal ribosomal protein uS7 family. As to quaternary structure, part of the 30S ribosomal subunit. Contacts proteins S9 and S11.

In terms of biological role, one of the primary rRNA binding proteins, it binds directly to 16S rRNA where it nucleates assembly of the head domain of the 30S subunit. Is located at the subunit interface close to the decoding center, probably blocks exit of the E-site tRNA. This Synechococcus sp. (strain JA-2-3B'a(2-13)) (Cyanobacteria bacterium Yellowstone B-Prime) protein is Small ribosomal subunit protein uS7.